Reading from the N-terminus, the 941-residue chain is 26S proteasome regulatory subunit RPN2 (941 aa).

PC repeat units follow at residues 363 to 396 (SATA…SSRF), 400 to 437 (GSLY…EDVD), 442 to 476 (GASL…TSGE), 477 to 511 (AAAF…GNIT), 513 to 546 (GLSM…LIRY), 547 to 582 (GGAF…DVRR), 583 to 615 (AAVT…AHDR), 617 to 651 (GAAF…FVRQ), 652 to 689 (AAMI…KHQE), and 695 to 731 (GACV…VGLA). Positions 808–854 (KARAKKTKKEKDTNEDDKKKKEKDLKKEETKKDDAKKESEAEEDFNK) are disordered. The segment covering 816–854 (KEKDTNEDDKKKKEKDLKKEETKKDDAKKESEAEEDFNK) has biased composition (basic and acidic residues).

This sequence belongs to the proteasome subunit S1 family.

Functionally, acts as a regulatory subunit of the 26S proteasome which is involved in the ATP-dependent degradation of ubiquitinated proteins. This is 26S proteasome regulatory subunit RPN2 (RPN2) from Candida glabrata (strain ATCC 2001 / BCRC 20586 / JCM 3761 / NBRC 0622 / NRRL Y-65 / CBS 138) (Yeast).